The primary structure comprises 226 residues: Putative ABC transporter ATP-binding protein BH02760 (226 aa).

The ABC transporter domain maps to 4–222 (IKFDKVTQVF…IPLVAIKEYI (219 aa)). 35–42 (GANGSGKS) provides a ligand contact to ATP.

The protein belongs to the ABC transporter superfamily.

The protein localises to the cell inner membrane. Probably part of an ABC transporter complex. Responsible for energy coupling to the transport system. This chain is Putative ABC transporter ATP-binding protein BH02760, found in Bartonella henselae (strain ATCC 49882 / DSM 28221 / CCUG 30454 / Houston 1) (Rochalimaea henselae).